The following is a 327-amino-acid chain: Olfactory receptor 9G4 (327 aa).

Residues 1–43 (MIFPSHDSQAFTSVDMEVGNCTILTEFILLGFSADSQWQPILF) lie on the Extracellular side of the membrane. A glycan (N-linked (GlcNAc...) asparagine) is linked at asparagine 20. A helical membrane pass occupies residues 44-64 (GVFLMLYLITLSGNMTLVILI). Over 65–71 (RTDSHLH) the chain is Cytoplasmic. The chain crosses the membrane as a helical span at residues 72–92 (TPMYFFIGNLSFLDFWYTSVY). The Extracellular portion of the chain corresponds to 93–113 (TPKILASCVSEDKRISLAGCG). The cysteines at positions 112 and 194 are disulfide-linked. A helical membrane pass occupies residues 114–134 (AQLFFSCVVAYTECYLLAAMA). Over 135 to 152 (YDRHAAICNPLLYSGTMS) the chain is Cytoplasmic. A helical membrane pass occupies residues 153-173 (TALCTGLVAGSYIGGFLNAIA). Over 174–212 (HTANTFRLHFCGKNIIDHFFCDAPPLVKMSCTNTRVYEK) the chain is Extracellular. A helical transmembrane segment spans residues 213 to 233 (VLLGVVGFTVLSSILAILISY). Over 234 to 252 (VNILLAILRIHSASGRHKA) the chain is Cytoplasmic. Residues 253 to 273 (FSTCASHLISVMLFYGSLLFM) traverse the membrane as a helical segment. Residues 274–286 (YSRPSSTYSLERD) are Extracellular-facing. A helical transmembrane segment spans residues 287–307 (KVAALFYTVINPLLNPLIYSL). Residues 308-327 (RNKDIKEAFRKATQTIQPQT) lie on the Cytoplasmic side of the membrane.

This sequence belongs to the G-protein coupled receptor 1 family.

It is found in the cell membrane. Odorant receptor. This is Olfactory receptor 9G4 (OR9G4) from Homo sapiens (Human).